A 537-amino-acid chain; its full sequence is Probable sterol O-acyltransferase 1 (537 aa).

The next 4 membrane-spanning stretches (helical) occupy residues 98-118 (FRGF…QLYA), 140-160 (FFVL…SYGL), 174-194 (LGYT…VYWV), and 199-219 (FPIV…MKQF). Residue N250 is glycosylated (N-linked (GlcNAc...) asparagine). A run of 2 helical transmembrane segments spans residues 344-364 (FGLL…SAVA) and 384-404 (IMFP…DCIL). The FYXDWWN motif motif lies at 418-424 (FYGAWWN). A run of 2 helical transmembrane segments spans residues 462–482 (AVLL…LLAT) and 517–537 (VFFW…YIVF). The active site involves H474.

The protein belongs to the membrane-bound acyltransferase family. Sterol o-acyltransferase subfamily.

The protein resides in the endoplasmic reticulum membrane. Its function is as follows. Sterol O-acyltransferase that catalyzes the formation of stery esters. This chain is Probable sterol O-acyltransferase 1 (are1), found in Schizosaccharomyces pombe (strain 972 / ATCC 24843) (Fission yeast).